Here is a 315-residue protein sequence, read N- to C-terminus: Melanoma-associated antigen 9 (315 aa).

Over residues 1 to 13 (MSLEQRSPHCKPD) the composition is skewed to basic and acidic residues. Residues 1–67 (MSLEQRSPHC…PQSPQGGASS (67 aa)) are disordered. The segment covering 50-67 (SAAGSSSPPQSPQGGASS) has biased composition (low complexity). Positions 108 to 307 (LKLKVAELVH…ICYPSLYEEV (200 aa)) constitute an MAGE domain.

As to expression, expressed in many tumors of several types, such as melanoma, head and neck squamous cell carcinoma, lung carcinoma and breast carcinoma, but not in normal tissues except for testes and placenta.

Not known, though may play a role in embryonal development and tumor transformation or aspects of tumor progression. The polypeptide is Melanoma-associated antigen 9 (MAGEA9) (Homo sapiens (Human)).